The primary structure comprises 254 residues: Acetylglutamate kinase (254 aa).

Residues 40 to 41 (GG), R62, and N158 contribute to the substrate site.

This sequence belongs to the acetylglutamate kinase family. ArgB subfamily.

Its subcellular location is the cytoplasm. The enzyme catalyses N-acetyl-L-glutamate + ATP = N-acetyl-L-glutamyl 5-phosphate + ADP. The protein operates within amino-acid biosynthesis; L-arginine biosynthesis; N(2)-acetyl-L-ornithine from L-glutamate: step 2/4. Functionally, catalyzes the ATP-dependent phosphorylation of N-acetyl-L-glutamate. The polypeptide is Acetylglutamate kinase (Chloroflexus aurantiacus (strain ATCC 29366 / DSM 635 / J-10-fl)).